The primary structure comprises 261 residues: Short-chain dehydrogenase/reductase AFUA_1G00990 (261 aa).

The NADP(+) site is built by Leu-19, Asp-67, Asn-94, Tyr-169, Lys-173, and Thr-213. Catalysis depends on Tyr-169, which acts as the Proton donor. Lys-173 (lowers pKa of active site Tyr) is an active-site residue.

Belongs to the short-chain dehydrogenases/reductases (SDR) family.

In terms of biological role, short-chain dehydrogenase/reductase; part of the gene cluster that mediates the biosynthesis of fumigermin that inhibits germination of spores of the inducing S.rapamycinicus, and thus helps the fungus to defend resources in the shared habitat against a bacterial competitor. The partially reducing polyketide synthase fngA alone is sufficient for the production of fumigermin. FgnA catalyzes the condensation of 3 malonyl-CoA units to an acetyl-CoA starter, and 3 methylations to yield fumigermin. It is remarkable that the five cluster genes including fgnA are conserved in distantly related fungi, supporting the assumption of a fumigermin cluster; it is thus possible that originally all five genes were functional, but that the genes encoding tailoring enzymes became inactive from mutations, similar to the case of the fgnA gene in strains A1163 and Af293. This chain is Short-chain dehydrogenase/reductase AFUA_1G00990, found in Aspergillus fumigatus (strain ATCC MYA-4609 / CBS 101355 / FGSC A1100 / Af293) (Neosartorya fumigata).